Here is an 841-residue protein sequence, read N- to C-terminus: mRNA export factor ICP27 homolog (841 aa).

Disordered stretches follow at residues 12-82 (PFAG…QYDK) and 115-163 (RAQG…TSPD). Residues 32–49 (YSQQQSQHYYYGHNQSSY) are compositionally biased toward low complexity. A compositionally biased stretch (pro residues) spans 66 to 79 (MPPPLSSPSSPPPQ). Low complexity predominate over residues 132-147 (SSLVSSNNSNNNTTLS). Residues cysteine 298, histidine 411, cysteine 413, and cysteine 418 each contribute to the Zn(2+) site. A CHC2-type zinc finger spans residues 298–418 (CLLDSPGGGG…PGHRCQNEIC (121 aa)). Disordered regions lie at residues 444–749 (HPNG…DDLH) and 774–811 (SVTP…TDQP). Residues 495–507 (VDSRGGGGDRRGD) are compositionally biased toward basic and acidic residues. A compositionally biased stretch (basic residues) spans 514–526 (NHHRHHTRRARTR). A compositionally biased stretch (basic and acidic residues) spans 553–563 (RRGEAQRESNG). Low complexity-rich tracts occupy residues 568 to 579 (KSPSTVSSTTVH) and 591 to 603 (SRKS…QPET). A compositionally biased stretch (pro residues) spans 614 to 623 (MPPPPSPCSP). Residues 641–657 (RPHDPPSGEPADAEKEL) are compositionally biased toward basic and acidic residues. Positions 688–699 (DSSSSSSDSSSS) are enriched in low complexity. Basic and acidic residues predominate over residues 708 to 731 (EDCRELDLQSKRLEEALEERCERD). 2 stretches are compositionally biased toward acidic residues: residues 732-749 (FEAD…DDLH) and 793-809 (DAEE…DETD).

It belongs to the HHV-1 ICP27 protein family.

The protein resides in the virion tegument. It is found in the virion. Its subcellular location is the host nucleus. The protein localises to the host cytoplasm. Its function is as follows. Immediate early (EI) protein that plays many roles during productive infection including regulation of viral gene expression and nuclear export of intronless viral RNAs. This is mRNA export factor ICP27 homolog from Mus musculus (Mouse).